The sequence spans 497 residues: Probable malate:quinone oxidoreductase (497 aa).

The protein belongs to the MQO family. It depends on FAD as a cofactor.

It carries out the reaction (S)-malate + a quinone = a quinol + oxaloacetate. It participates in carbohydrate metabolism; tricarboxylic acid cycle; oxaloacetate from (S)-malate (quinone route): step 1/1. In Flavobacterium johnsoniae (strain ATCC 17061 / DSM 2064 / JCM 8514 / BCRC 14874 / CCUG 350202 / NBRC 14942 / NCIMB 11054 / UW101) (Cytophaga johnsonae), this protein is Probable malate:quinone oxidoreductase.